The primary structure comprises 233 residues: Probable GTP-binding protein EngB (233 aa).

Positions 23-209 constitute an EngB-type G domain; sequence AVPEVAFAGR…QRIVAGWLCL (187 aa). Residues 31–38, 58–62, 82–85, 149–152, and 188–190 each bind GTP; these read GRSNAGKS, GRTQH, DLPG, TKAD, and FSS. Serine 38 and threonine 60 together coordinate Mg(2+).

Belongs to the TRAFAC class TrmE-Era-EngA-EngB-Septin-like GTPase superfamily. EngB GTPase family. It depends on Mg(2+) as a cofactor.

Its function is as follows. Necessary for normal cell division and for the maintenance of normal septation. The protein is Probable GTP-binding protein EngB of Ralstonia pickettii (strain 12J).